We begin with the raw amino-acid sequence, 134 residues long: uncharacterized protein (134 aa).

Belongs to the orthopoxviruses B21 protein family.

This is an uncharacterized protein from Bos taurus (Bovine).